We begin with the raw amino-acid sequence, 593 residues long: Chromodomain Y-like protein (593 aa).

The segment covering methionine 1–glutamine 14 has biased composition (polar residues). Residues methionine 1–threonine 30 form a disordered region. Residues threonine 56–serine 116 form the Chromo domain. Residues threonine 56–threonine 304 are interaction with EZH2. Serine 83 is subject to Phosphoserine. The segment at glutamate 110–serine 158 is disordered. Low complexity predominate over residues leucine 117–arginine 129. At lysine 130 the chain carries N6,N6,N6-trimethyllysine; by EHMT2; alternate. Lysine 130 carries the N6,N6-dimethyllysine; by EHMT2; alternate modification. Lysine 130 bears the N6-methyllysine; by EHMT2; alternate mark. Over residues serine 133–lysine 146 the composition is skewed to polar residues. Serine 165, serine 196, and serine 211 each carry phosphoserine. The segment at glycine 200–glutamate 223 is disordered. The tract at residues serine 357 to lysine 589 is acetyl-CoA-binding domain.

As to quaternary structure, forms multimers and multimerization is required for stable binding to chromatin. Interacts with HDAC1 and HDAC2 via its C-terminal acetyl-CoA-binding domain. Interacts with EZH2, EED, SUZ12, REST, EHMT1 and EHMT2. Part of a complex containing at least CDYL, REST, WIZ, SETB1, EHMT1 and EHMT2. Part of a complex containing at least CDYL, MIER1, MIER2, HDAC1 and HDAC2. Interacts with CHAF1A and CHAF1B; bridging the CAF-1 complex to the MCM2-7 (MCM) complex. Interacts with MCM3 and MCM5; bridging the CAF-1 complex to the MCM2-7 (MCM) complex. Interacts with EHMT2 and PRDM9; interaction only takes place when PRDM9 is bound to hotspot DNA. As to expression, highly expressed in testis (at protein level). Expressed in the hippocampus (at protein level). Expressed in the medial prefrontal cortex, prelimbic cortex, intralimbic cortex and cingulate cortex area (at protein level). Isoform 1: Expressed as 2 transcripts encoding the same protein, a ubiquitous transcript and a highly expressed testis-specific transcript.

Its subcellular location is the nucleus. The protein resides in the chromosome. The catalysed reaction is L-lysyl-[protein] + acetyl-CoA = N(6)-acetyl-L-lysyl-[protein] + CoA + H(+). It carries out the reaction 3-hydroxybutanoyl-CoA = (2E)-butenoyl-CoA + H2O. In terms of biological role, chromatin reader protein that recognizes and binds histone H3 trimethylated at 'Lys-9', dimethylated at 'Lys-27' and trimethylated at 'Lys-27' (H3K9me3, H3K27me2 and H3K27me3, respectively). Part of multimeric repressive chromatin complexes, where it is required for transmission and restoration of repressive histone marks, thereby preserving the epigenetic landscape. Required for chromatin targeting and maximal enzymatic activity of Polycomb repressive complex 2 (PRC2); acts as a positive regulator of PRC2 activity by bridging the pre-existing histone H3K27me3 and newly recruited PRC2 on neighboring nucleosomes. Acts as a corepressor for REST by facilitating histone-lysine N-methyltransferase EHMT2 recruitment and H3K9 dimethylation at REST target genes for repression. Involved in X chromosome inactivation in females: recruited to Xist RNA-coated X chromosome and facilitates propagation of H3K9me2 by anchoring EHMT2. Promotes EZH2 accumulation and H3K27me3 methylation at DNA double strand breaks (DSBs), thereby facilitating transcriptional repression at sites of DNA damage and homology-directed repair of DSBs. Required for neuronal migration during brain development by repressing expression of RHOA. By repressing the expression of SCN8A, contributes to the inhibition of intrinsic neuronal excitability and epileptogenesis. In addition to acting as a chromatin reader, acts as a hydro-lyase. Shows crotonyl-coA hydratase activity by mediating the conversion of crotonyl-CoA ((2E)-butenoyl-CoA) to beta-hydroxybutyryl-CoA (3-hydroxybutanoyl-CoA), thereby acting as a negative regulator of histone crotonylation. Histone crotonylation is required during spermatogenesis; down-regulation of histone crotonylation by CDYL regulates the reactivation of sex chromosome-linked genes in round spermatids and histone replacement in elongating spermatids. By regulating histone crotonylation and trimethylation of H3K27, may be involved in stress-induced depression-like behaviors, possibly by regulating VGF expression. May have histone acetyltransferase activity; such activity is however unsure in vivo. Functionally, not able to recognize and bind histone H3K9me3, histone H3K27me2 and histone H3K27me3, due to the presence of a N-terminal extension that inactivates the chromo domain. This chain is Chromodomain Y-like protein, found in Mus musculus (Mouse).